We begin with the raw amino-acid sequence, 512 residues long: Pantetheinase (512 aa).

An N-terminal signal peptide occupies residues 1-23 (MGMSWWLACAAAFSALCVLKASS). The region spanning 32–308 (YEHAVILPKD…GKLLFAQLKS (277 aa)) is the CN hydrolase domain. The active-site Proton acceptor is Glu-81. N-linked (GlcNAc...) asparagine glycans are attached at residues Asn-132 and Asn-148. The Proton donor role is filled by Lys-180. Catalysis depends on Cys-213, which acts as the Nucleophile. Residues Asn-316 and Asn-354 are each glycosylated (N-linked (GlcNAc...) asparagine). Asn-488 is lipidated: GPI-anchor amidated asparagine. Positions 489 to 512 (ASSDFIAHSLIIMLIVTPIIHYLC) are cleaved as a propeptide — removed in mature form.

The protein belongs to the carbon-nitrogen hydrolase superfamily. BTD/VNN family. Monomer. Post-translationally, N-glycosylated. In terms of tissue distribution, detected in kidney (at protein level). Ubiquitous.

It localises to the cell membrane. It catalyses the reaction (R)-pantetheine + H2O = cysteamine + (R)-pantothenate. Amidohydrolase that hydrolyzes specifically one of the carboamide linkages in D-pantetheine thus recycling pantothenic acid (vitamin B5) and releasing cysteamine. The sequence is that of Pantetheinase (Vnn1) from Mus musculus (Mouse).